Consider the following 464-residue polypeptide: Asparagine--tRNA ligase (464 aa).

It belongs to the class-II aminoacyl-tRNA synthetase family. In terms of assembly, homodimer.

It localises to the cytoplasm. It catalyses the reaction tRNA(Asn) + L-asparagine + ATP = L-asparaginyl-tRNA(Asn) + AMP + diphosphate + H(+). The sequence is that of Asparagine--tRNA ligase from Xanthomonas axonopodis pv. citri (strain 306).